A 383-amino-acid polypeptide reads, in one-letter code: Putative glutamate--cysteine ligase 2-2 (383 aa).

Belongs to the glutamate--cysteine ligase type 2 family. YbdK subfamily.

The catalysed reaction is L-cysteine + L-glutamate + ATP = gamma-L-glutamyl-L-cysteine + ADP + phosphate + H(+). In terms of biological role, ATP-dependent carboxylate-amine ligase which exhibits weak glutamate--cysteine ligase activity. In Legionella pneumophila (strain Lens), this protein is Putative glutamate--cysteine ligase 2-2.